A 447-amino-acid polypeptide reads, in one-letter code: Protein cortex (447 aa).

6 WD repeats span residues 108-148 (TYSY…IGHG), 149-188 (FAEY…KIMS), 198-237 (NMNC…ISWR), 281-325 (DSDW…VRDT), 344-380 (GELV…DQWG), and 384-423 (SGLD…NKMK). A D-box motif is present at residues 384–395 (SGLDRVRTMIFS).

Belongs to the WD repeat CORT family.

It localises to the cytoplasm. Functionally, controls wing pigmentation patterning by regulating scale cell development, thereby playing a key role in mimicry and crypsis. Probably acts as an activator of the anaphase promoting complex/cyclosome (APC/C) that promotes the ubiquitin ligase activity and substrate specificity of the APC/C. The sequence is that of Protein cortex from Heliconius melpomene (Postman butterfly).